A 150-amino-acid chain; its full sequence is Cytochrome c oxidase subunit 5A, mitochondrial (150 aa).

The transit peptide at 1–41 (MLGAALRRCAVAATARAGPRGLLHSAPTPGPAAAIQSVRCY) directs the protein to the mitochondrion. An SIFI-degron motif is present at residues 2–17 (LGAALRRCAVAATARA). N6-acetyllysine occurs at positions 87 and 113. Threonine 141 carries the post-translational modification Phosphothreonine.

Belongs to the cytochrome c oxidase subunit 5A family. As to quaternary structure, component of the cytochrome c oxidase (complex IV, CIV), a multisubunit enzyme composed of 14 subunits. The complex is composed of a catalytic core of 3 subunits MT-CO1, MT-CO2 and MT-CO3, encoded in the mitochondrial DNA, and 11 supernumerary subunits COX4I, COX5A, COX5B, COX6A, COX6B, COX6C, COX7A, COX7B, COX7C, COX8 and NDUFA4, which are encoded in the nuclear genome. The complex exists as a monomer or a dimer and forms supercomplexes (SCs) in the inner mitochondrial membrane with NADH-ubiquinone oxidoreductase (complex I, CI) and ubiquinol-cytochrome c oxidoreductase (cytochrome b-c1 complex, complex III, CIII), resulting in different assemblies (supercomplex SCI(1)III(2)IV(1) and megacomplex MCI(2)III(2)IV(2)). Interacts with AFG1L. Interacts with RAB5IF. In terms of processing, in response to mitochondrial stress, the precursor protein is ubiquitinated by the SIFI complex in the cytoplasm before mitochondrial import, leading to its degradation. Within the SIFI complex, UBR4 initiates ubiquitin chain that are further elongated or branched by KCMF1.

It is found in the mitochondrion inner membrane. The protein operates within energy metabolism; oxidative phosphorylation. Component of the cytochrome c oxidase, the last enzyme in the mitochondrial electron transport chain which drives oxidative phosphorylation. The respiratory chain contains 3 multisubunit complexes succinate dehydrogenase (complex II, CII), ubiquinol-cytochrome c oxidoreductase (cytochrome b-c1 complex, complex III, CIII) and cytochrome c oxidase (complex IV, CIV), that cooperate to transfer electrons derived from NADH and succinate to molecular oxygen, creating an electrochemical gradient over the inner membrane that drives transmembrane transport and the ATP synthase. Cytochrome c oxidase is the component of the respiratory chain that catalyzes the reduction of oxygen to water. Electrons originating from reduced cytochrome c in the intermembrane space (IMS) are transferred via the dinuclear copper A center (CU(A)) of subunit 2 and heme A of subunit 1 to the active site in subunit 1, a binuclear center (BNC) formed by heme A3 and copper B (CU(B)). The BNC reduces molecular oxygen to 2 water molecules using 4 electrons from cytochrome c in the IMS and 4 protons from the mitochondrial matrix. The sequence is that of Cytochrome c oxidase subunit 5A, mitochondrial (COX5A) from Cebuella pygmaea (Pygmy marmoset).